The primary structure comprises 456 residues: Bifunctional protein GlmU (456 aa).

The pyrophosphorylase stretch occupies residues 1-229; the sequence is MLNNAMSVVI…LSEVEGVNNR (229 aa). UDP-N-acetyl-alpha-D-glucosamine contacts are provided by residues 11 to 14, Lys-25, Gln-76, 81 to 82, 103 to 105, Gly-140, Glu-154, Asn-169, and Asn-227; these read LAAG, GT, and YGD. Position 105 (Asp-105) interacts with Mg(2+). Asn-227 contributes to the Mg(2+) binding site. Positions 230–250 are linker; the sequence is LQLSRLERVYQSEQAEKLLLA. Residues 251–456 are N-acetyltransferase; sequence GVMLRDPARF…EGWRRPVKKK (206 aa). Residues Arg-333 and Lys-351 each contribute to the UDP-N-acetyl-alpha-D-glucosamine site. Catalysis depends on His-363, which acts as the Proton acceptor. UDP-N-acetyl-alpha-D-glucosamine is bound by residues Tyr-366 and Asn-377. Residues Ala-380, 386–387, Ser-405, Ala-423, and Arg-440 contribute to the acetyl-CoA site; that span reads NY.

This sequence in the N-terminal section; belongs to the N-acetylglucosamine-1-phosphate uridyltransferase family. In the C-terminal section; belongs to the transferase hexapeptide repeat family. Homotrimer. Mg(2+) is required as a cofactor.

It is found in the cytoplasm. It catalyses the reaction alpha-D-glucosamine 1-phosphate + acetyl-CoA = N-acetyl-alpha-D-glucosamine 1-phosphate + CoA + H(+). The catalysed reaction is N-acetyl-alpha-D-glucosamine 1-phosphate + UTP + H(+) = UDP-N-acetyl-alpha-D-glucosamine + diphosphate. Its pathway is nucleotide-sugar biosynthesis; UDP-N-acetyl-alpha-D-glucosamine biosynthesis; N-acetyl-alpha-D-glucosamine 1-phosphate from alpha-D-glucosamine 6-phosphate (route II): step 2/2. It participates in nucleotide-sugar biosynthesis; UDP-N-acetyl-alpha-D-glucosamine biosynthesis; UDP-N-acetyl-alpha-D-glucosamine from N-acetyl-alpha-D-glucosamine 1-phosphate: step 1/1. The protein operates within bacterial outer membrane biogenesis; LPS lipid A biosynthesis. In terms of biological role, catalyzes the last two sequential reactions in the de novo biosynthetic pathway for UDP-N-acetylglucosamine (UDP-GlcNAc). The C-terminal domain catalyzes the transfer of acetyl group from acetyl coenzyme A to glucosamine-1-phosphate (GlcN-1-P) to produce N-acetylglucosamine-1-phosphate (GlcNAc-1-P), which is converted into UDP-GlcNAc by the transfer of uridine 5-monophosphate (from uridine 5-triphosphate), a reaction catalyzed by the N-terminal domain. The protein is Bifunctional protein GlmU of Escherichia coli O6:K15:H31 (strain 536 / UPEC).